Reading from the N-terminus, the 253-residue chain is RNA polymerase sigma factor SigI6 (253 aa).

The Polymerase core binding signature appears at 63 to 76; it reads EEYSVALLAFNEAI. The segment at residues 203 to 222 is a DNA-binding region (H-T-H motif); the sequence is TLELLKLAKVSRRTIERNKK.

Belongs to the sigma-70 factor family. SigI subfamily. In terms of assembly, interacts with RsgI6.

It localises to the cytoplasm. With respect to regulation, negatively regulated by the anti-sigma-I factor RsgI6. Binding of the polysaccharide substrate to RsgI6 may lead to the release and activation of SigI6. In terms of biological role, sigma factors are initiation factors that promote the attachment of RNA polymerase to specific initiation sites and are then released. This sigma factor is involved in regulation of cellulosomal genes via an external polysaccharide-sensing mechanism. Recognizes the predicted promoters associated with sigI6 itself, xyn11B, xyn10D, xyn10Z, xyn10Y, cel9V, cseP, sigI1, cipA, and rsgI5. In Acetivibrio thermocellus (strain ATCC 27405 / DSM 1237 / JCM 9322 / NBRC 103400 / NCIMB 10682 / NRRL B-4536 / VPI 7372) (Clostridium thermocellum), this protein is RNA polymerase sigma factor SigI6.